A 144-amino-acid chain; its full sequence is Arginine decarboxylase proenzyme (144 aa).

Catalysis depends on S80, which acts as the Schiff-base intermediate with substrate; via pyruvic acid. A Pyruvic acid (Ser); by autocatalysis modification is found at S80. H85 (proton acceptor; for processing activity) is an active-site residue. C100 (proton donor; for catalytic activity) is an active-site residue.

It belongs to the prokaryotic AdoMetDC family. Type 1 subfamily. In terms of assembly, heterooctamer of four alpha and four beta chains arranged as a tetramer of alpha/beta heterodimers. Requires pyruvate as cofactor. In terms of processing, is synthesized initially as an inactive proenzyme. Formation of the active enzyme involves a self-maturation process in which the active site pyruvoyl group is generated from an internal serine residue via an autocatalytic post-translational modification. Two non-identical subunits are generated from the proenzyme in this reaction, and the pyruvate is formed at the N-terminus of the alpha chain, which is derived from the carboxyl end of the proenzyme. The post-translation cleavage follows an unusual pathway, termed non-hydrolytic serinolysis, in which the side chain hydroxyl group of the serine supplies its oxygen atom to form the C-terminus of the beta chain, while the remainder of the serine residue undergoes an oxidative deamination to produce ammonia and the pyruvoyl group blocking the N-terminus of the alpha chain.

It carries out the reaction L-arginine + H(+) = agmatine + CO2. Its pathway is amine and polyamine biosynthesis; agmatine biosynthesis; agmatine from L-arginine: step 1/1. Functionally, specifically catalyzes the decarboxylation of L-arginine to agmatine. Has no S-adenosylmethionine decarboxylase (AdoMetDC) activity. The protein is Arginine decarboxylase proenzyme of Ignicoccus hospitalis (strain KIN4/I / DSM 18386 / JCM 14125).